A 354-amino-acid polypeptide reads, in one-letter code: Uroporphyrinogen decarboxylase (354 aa).

Substrate is bound by residues 27–31 (RQAGR), Asp77, Tyr154, Thr209, and His327.

The protein belongs to the uroporphyrinogen decarboxylase family. Homodimer.

It localises to the cytoplasm. It catalyses the reaction uroporphyrinogen III + 4 H(+) = coproporphyrinogen III + 4 CO2. The protein operates within porphyrin-containing compound metabolism; protoporphyrin-IX biosynthesis; coproporphyrinogen-III from 5-aminolevulinate: step 4/4. In terms of biological role, catalyzes the decarboxylation of four acetate groups of uroporphyrinogen-III to yield coproporphyrinogen-III. In Enterobacter sp. (strain 638), this protein is Uroporphyrinogen decarboxylase.